A 418-amino-acid chain; its full sequence is Probable serine hydroxymethyltransferase (418 aa).

Residues Leu118 and 122–124 each bind (6S)-5,6,7,8-tetrahydrofolate; that span reads GHL. Lys226 carries the N6-(pyridoxal phosphate)lysine modification. Residue 351–353 participates in (6S)-5,6,7,8-tetrahydrofolate binding; that stretch reads SPF.

This sequence belongs to the SHMT family. Homodimer. Pyridoxal 5'-phosphate serves as cofactor.

The protein resides in the cytoplasm. The catalysed reaction is (6R)-5,10-methylene-5,6,7,8-tetrahydrofolate + glycine + H2O = (6S)-5,6,7,8-tetrahydrofolate + L-serine. The protein operates within one-carbon metabolism; tetrahydrofolate interconversion. Its function is as follows. Catalyzes the reversible interconversion of serine and glycine with tetrahydrofolate (THF) serving as the one-carbon carrier. This reaction serves as the major source of one-carbon groups required for the biosynthesis of purines, thymidylate, methionine, and other important biomolecules. The polypeptide is Probable serine hydroxymethyltransferase (Mesomycoplasma hyopneumoniae (strain J / ATCC 25934 / NCTC 10110) (Mycoplasma hyopneumoniae)).